Here is a 414-residue protein sequence, read N- to C-terminus: Serine hydroxymethyltransferase (414 aa).

(6S)-5,6,7,8-tetrahydrofolate is bound by residues Leu-117 and 121–123 (GHL). At Lys-226 the chain carries N6-(pyridoxal phosphate)lysine. (6S)-5,6,7,8-tetrahydrofolate is bound at residue 349–351 (SPF).

This sequence belongs to the SHMT family. As to quaternary structure, homodimer. Requires pyridoxal 5'-phosphate as cofactor.

It is found in the cytoplasm. The catalysed reaction is (6R)-5,10-methylene-5,6,7,8-tetrahydrofolate + glycine + H2O = (6S)-5,6,7,8-tetrahydrofolate + L-serine. It participates in one-carbon metabolism; tetrahydrofolate interconversion. It functions in the pathway amino-acid biosynthesis; glycine biosynthesis; glycine from L-serine: step 1/1. Functionally, catalyzes the reversible interconversion of serine and glycine with tetrahydrofolate (THF) serving as the one-carbon carrier. This reaction serves as the major source of one-carbon groups required for the biosynthesis of purines, thymidylate, methionine, and other important biomolecules. Also exhibits THF-independent aldolase activity toward beta-hydroxyamino acids, producing glycine and aldehydes, via a retro-aldol mechanism. In Desulfovibrio desulfuricans (strain ATCC 27774 / DSM 6949 / MB), this protein is Serine hydroxymethyltransferase.